The sequence spans 225 residues: MKFPDLLRCSRAVSLARPDLPRNSPDVYDTKIPILQAITAKKCQRFRGDWGAKRKLPILKNRHISIQKFDTFEHQCAFISSDRFVRTLKRIYDLKLPVPLNDYEQISPYLLQKYNTFSSSNPKSRPTLPPGILYAKLKLLDSFSDSEKKRLSLVSFIQTKKVPLPFTYGKFAPDSKECLFGVSGVIAATSLKGITSTKNRYVIRSLNVDETGKTIPNITRENRSI.

The N-terminal 84 residues, 1-84 (MKFPDLLRCS…QCAFISSDRF (84 aa)), are a transit peptide targeting the mitochondrion.

Belongs to the bacterial ribosomal protein bS1 family. Component of the mitochondrial small ribosomal subunit (mt-SSU). Mature yeast 74S mitochondrial ribosomes consist of a small (37S) and a large (54S) subunit. The 37S small subunit contains a 15S ribosomal RNA (15S mt-rRNA) and at least 32 different proteins. The 54S large subunit contains a 21S rRNA (21S mt-rRNA) and at least 45 different proteins. This subunit is mutually exclusive with mrp51/small ribosomal subunit protein bS1m.

It is found in the mitochondrion. In terms of biological role, component of the mitochondrial ribosome (mitoribosome), a dedicated translation machinery responsible for the synthesis of mitochondrial genome-encoded proteins, including at least some of the essential transmembrane subunits of the mitochondrial respiratory chain. The mitoribosomes are attached to the mitochondrial inner membrane and translation products are cotranslationally integrated into the membrane. Functionally interacts with the 5'-UTR of mitochondrial mRNAs. Specifically plays a role in the translation of cob1/cytochrome b and cox3. Has a role in meiosis. This Schizosaccharomyces pombe (strain 972 / ATCC 24843) (Fission yeast) protein is Small ribosomal subunit protein L51-b.